Here is a 285-residue protein sequence, read N- to C-terminus: Glutamate racemase (285 aa).

Substrate is bound by residues 28-29 and 60-61; these read DS and YG. The Proton donor/acceptor role is filled by cysteine 92. 93–94 serves as a coordination point for substrate; it reads NT. Residues arginine 104 and 113–119 contribute to the UDP-N-acetyl-alpha-D-muramoyl-L-alanine site; that span reads GVVPAIK. Catalysis depends on cysteine 204, which acts as the Proton donor/acceptor. Residue 205–206 coordinates substrate; the sequence is TH.

The protein belongs to the aspartate/glutamate racemases family. In terms of assembly, monomer.

The catalysed reaction is L-glutamate = D-glutamate. Its pathway is cell wall biogenesis; peptidoglycan biosynthesis. Its activity is regulated as follows. The low basal catalytic activity in increased 1000-fold in the presence of UDP-MurNAc-L-Ala, the product of the preceding enzyme in the peptidoglycan biosynthesis. Functionally, provides the (R)-glutamate required for cell wall biosynthesis. The protein is Glutamate racemase of Escherichia coli (strain K12).